The primary structure comprises 340 residues: MNCVVCSGRATNRNYGAMSCFACKMFFHRTVYKNLLFRCKRIQNCTIHFKIFPKCRACRFQKCLIVGMTLAPLNDGIVSIGNQSDYSYAKLLDDLKFKNDKNYSHFVNFYSLEDPSLADILKDRGIMKLVKRTPKTLNDVDQWSIMMAYSRISYFLDFNFIRDLDSSDKNTLFKYNISRAGCLALAKCAFNENKPKLTFPNDVDAFPSEMYNLCGSSTAVLNQVSGQVIAKFVELKIKDEEYLLLILVMFCNPSISNDFSDKTKLALSSHQQAFCSALFRYCQINYSKSAPTRFTELLSLFGIVNKSVDNMNNLSMMLQFCEPKFQFKRIMQDLFSNSLL.

The segment at residues 1-75 (MNCVVCSGRA…VGMTLAPLND (75 aa)) is a DNA-binding region (nuclear receptor). 2 consecutive NR C4-type zinc fingers follow at residues 3 to 23 (CVVCSGRATNRNYGAMSCFAC) and 39 to 58 (CKRIQNCTIHFKIFPKCRAC). Positions 98–337 (KNDKNYSHFV…KRIMQDLFSN (240 aa)) constitute an NR LBD domain.

It belongs to the nuclear hormone receptor family.

The protein resides in the nucleus. Functionally, orphan nuclear receptor. This is Nuclear hormone receptor family member nhr-197 (nhr-197) from Caenorhabditis elegans.